The following is a 920-amino-acid chain: WD repeat-containing protein 47 (920 aa).

The region spanning 10-42 (KEVEIIKLILDFLNSKKLHISMLALEKESGVIN) is the LisH domain. Positions 45–102 (FSDDMLFLRQLILDGQWDEVLQFIQPLECMEKFDKKRFRYIILKQKFLEALCVNNAMS) constitute a CTLH domain. A Phosphothreonine modification is found at threonine 285. Phosphoserine occurs at positions 289, 292, 297, and 312. Residues 371 to 380 (YEESPERSDT) are compositionally biased toward basic and acidic residues. The tract at residues 371 to 422 (YEESPERSDTPVEAQQPVSSEAMCQGSGLEKEPANGAQNPVPAKQEKNELRD) is disordered. Position 423 is a phosphoserine (serine 423). Residues 501 to 594 (LNQQCSGSKN…RSKGEEDDKS (94 aa)) form a disordered region. Residues 506–523 (SGSKNNGSNNSSVTSFST) show a composition bias toward low complexity. Positions 538-552 (NIHTSTPRNPGSTNH) are enriched in polar residues. Threonine 543 bears the Phosphothreonine mark. 7 WD repeats span residues 605 to 644 (EDTQAVRAVAFHPSGSLYAVGSNSKTLRVCAYPEKMDASA), 660 to 699 (HHKGSIYCVAWSPCGQLLATGSNDKYVKVLPFNAETCNAT), 707 to 749 (MHDG…GQGL), 754 to 792 (GHTGHILALYTWSGWMIASGSQDKTVRFWDLRVPSCVRV), 799 to 838 (GTGSAVASVAVDPSGRLLATGQEDSSCMLYDIRGGRMVQS), 841 to 880 (PHSSDVRSVRFSPGAHYLLTGSYDMKIKVTDLQGDLTKQL), and 887 to 919 (EHKDKVIQCRWHTQDLSFLSSSADRTVTLWTYS).

In terms of assembly, interacts with MAP1S (via WD repeats). Enriched in the nervous system (at protein level).

The protein resides in the cytoplasm. Its subcellular location is the cytoskeleton. The polypeptide is WD repeat-containing protein 47 (Wdr47) (Mus musculus (Mouse)).